The primary structure comprises 311 residues: GTPase Era (311 aa).

The 173-residue stretch at 16–188 folds into the Era-type G domain; it reads HAGFVAIVGK…REQLLEVLPE (173 aa). A G1 region spans residues 24–31; it reads GKPNVGKS. 24 to 31 serves as a coordination point for GTP; that stretch reads GKPNVGKS. The tract at residues 50 to 54 is G2; sequence QTTRR. The G3 stretch occupies residues 71–74; sequence DTPG. GTP contacts are provided by residues 71–75 and 133–136; these read DTPGL and NKTD. The segment at 133–136 is G4; sequence NKTD. The G5 stretch occupies residues 166–168; sequence LSA. In terms of domain architecture, KH type-2 spans 219–296; that stretch reads LRDELPYAVA…YLGLEVIVIP (78 aa).

Belongs to the TRAFAC class TrmE-Era-EngA-EngB-Septin-like GTPase superfamily. Era GTPase family. Monomer.

It localises to the cytoplasm. It is found in the cell membrane. In terms of biological role, an essential GTPase that binds both GDP and GTP, with rapid nucleotide exchange. Plays a role in 16S rRNA processing and 30S ribosomal subunit biogenesis and possibly also in cell cycle regulation and energy metabolism. The polypeptide is GTPase Era (Deinococcus radiodurans (strain ATCC 13939 / DSM 20539 / JCM 16871 / CCUG 27074 / LMG 4051 / NBRC 15346 / NCIMB 9279 / VKM B-1422 / R1)).